A 224-amino-acid chain; its full sequence is tRNA (guanine-N(7)-)-methyltransferase (224 aa).

4 residues coordinate S-adenosyl-L-methionine: glutamate 45, glutamate 70, aspartate 97, and aspartate 119. The active site involves aspartate 119. Substrate is bound by residues lysine 123, aspartate 155, and 199-202 (TEYE).

It belongs to the class I-like SAM-binding methyltransferase superfamily. TrmB family.

It carries out the reaction guanosine(46) in tRNA + S-adenosyl-L-methionine = N(7)-methylguanosine(46) in tRNA + S-adenosyl-L-homocysteine. Its pathway is tRNA modification; N(7)-methylguanine-tRNA biosynthesis. Functionally, catalyzes the formation of N(7)-methylguanine at position 46 (m7G46) in tRNA. This Ureaplasma urealyticum serovar 10 (strain ATCC 33699 / Western) protein is tRNA (guanine-N(7)-)-methyltransferase.